A 99-amino-acid polypeptide reads, in one-letter code: ASCAARACALSGSNITVTYCSCTDGTTHVCPDGDSHETNDMYFCENISGVAACPDTNTVAVEVIYRDDSTNPIEGFQLHCRCSTYESSGLHYVCEELIG.

In terms of processing, contains 5 disulfide bonds. In terms of tissue distribution, expressed by the venom duct.

It localises to the secreted. In terms of biological role, acts as a neurotoxin by inhibiting an ion channel. The protein is Turripeptide OL71 of Iotyrris olangoensis (Sea snail).